The chain runs to 249 residues: Chymase (249 aa).

The signal sequence occupies residues 1–19 (MHCLPLTLLLLLLCSRAEA). Positions 20-21 (EE) are cleaved as a propeptide — activation peptide. One can recognise a Peptidase S1 domain in the interval 22-245 (IIGGTESKPH…YRPWINKVLK (224 aa)). A disulfide bridge links C51 with C67. Catalysis depends on charge relay system residues H66 and D110. 2 disulfides stabilise this stretch: C144–C209 and C175–C188. The Charge relay system role is filled by S203.

Belongs to the peptidase S1 family. Granzyme subfamily.

It localises to the secreted. The protein resides in the cytoplasmic granule. It carries out the reaction Preferential cleavage: Phe-|-Xaa &gt; Tyr-|-Xaa &gt; Trp-|-Xaa &gt; Leu-|-Xaa.. In terms of biological role, major secreted protease of mast cells with suspected roles in vasoactive peptide generation, extracellular matrix degradation, and regulation of gland secretion. The polypeptide is Chymase (CMA1) (Canis lupus familiaris (Dog)).